A 241-amino-acid polypeptide reads, in one-letter code: Putative integrase ORF241 (241 aa).

In terms of domain architecture, Tyr recombinase spans 82–241 (VEAKKTLVSA…AIEMLRKLAD (160 aa)). Catalysis depends on residues Arg-119, Lys-144, His-191, Arg-194, and His-217. Tyr-226 (O-(3'-phospho-DNA)-tyrosine intermediate) is an active-site residue.

This sequence belongs to the 'phage' integrase family.

Functionally, this protein may encode an integrase, which is necessary for integration of the viral DNA into host genome. This is Putative integrase ORF241 from Acidianus convivator (ATV).